Reading from the N-terminus, the 218-residue chain is Small ribosomal subunit protein uS3c (218 aa).

A KH type-2 domain is found at 47–118 (VQKQIKNSSN…KIQITLKNVL (72 aa)).

It belongs to the universal ribosomal protein uS3 family. As to quaternary structure, part of the 30S ribosomal subunit.

It is found in the plastid. Its subcellular location is the chloroplast. The sequence is that of Small ribosomal subunit protein uS3c (rps3) from Angiopteris evecta (Mule's foot fern).